The following is a 416-amino-acid chain: UDP-N-acetylglucosamine 1-carboxyvinyltransferase (416 aa).

22–23 (KN) contacts phosphoenolpyruvate. Arginine 92 lines the UDP-N-acetyl-alpha-D-glucosamine pocket. Cysteine 116 serves as the catalytic Proton donor. Cysteine 116 carries the 2-(S-cysteinyl)pyruvic acid O-phosphothioketal modification. UDP-N-acetyl-alpha-D-glucosamine-binding positions include 121–125 (RPVDQ), aspartate 304, and isoleucine 326.

It belongs to the EPSP synthase family. MurA subfamily.

It localises to the cytoplasm. It catalyses the reaction phosphoenolpyruvate + UDP-N-acetyl-alpha-D-glucosamine = UDP-N-acetyl-3-O-(1-carboxyvinyl)-alpha-D-glucosamine + phosphate. It participates in cell wall biogenesis; peptidoglycan biosynthesis. Cell wall formation. Adds enolpyruvyl to UDP-N-acetylglucosamine. The polypeptide is UDP-N-acetylglucosamine 1-carboxyvinyltransferase (Cupriavidus necator (strain ATCC 17699 / DSM 428 / KCTC 22496 / NCIMB 10442 / H16 / Stanier 337) (Ralstonia eutropha)).